The primary structure comprises 836 residues: Zinc fingers and homeoboxes protein 2 (836 aa).

The tract at residues 24–58 (LEEADRAKDKGLGVPPSDVSKERWAAEPEPSSKES) is disordered. Residues 27 to 77 (ADRAKDKGLGVPPSDVSKERWAAEPEPSSKESEVVEVRSVGESQSKKLQGG) are interaction with EFNB1. A compositionally biased stretch (basic and acidic residues) spans 42–58 (VSKERWAAEPEPSSKES). C2H2-type zinc fingers lie at residues 78-101 (YECK…DMQH) and 110-133 (YVCA…SKFH). A disordered region spans residues 168–210 (SAPGSSDNDPGVSVGKTATVKTGKQKADAKKVPKKPDEAAPDN). Residues 192–210 (QKADAKKVPKKPDEAAPDN) show a composition bias toward basic and acidic residues. The tract at residues 195-358 (DAKKVPKKPD…PAQLTPTKVS (164 aa)) is required for homodimerization. 4 DNA-binding regions (homeobox) span residues 263–324 (NTTK…WSPE), 439–501 (TPAS…IVHI), 530–591 (AQKF…EQAV), and 628–690 (SPSS…TLSW). The required for repressor activity stretch occupies residues 263 to 446 (NTTKYNSALD…PLTPASDRKK (184 aa)). The required for interaction with NFYA stretch occupies residues 263–497 (NTTKYNSALD…SDHRYRCQRG (235 aa)). The interval 317-446 (HGISWSPEEV…PLTPASDRKK (130 aa)) is required for nuclear localization. Positions 404–442 (GQKRPLVTPQAAPEPKRPHIAQVPEPPPKVANTPLTPAS) are disordered. A Glycyl lysine isopeptide (Lys-Gly) (interchain with G-Cter in SUMO2) cross-link involves residue Lys455. Composition is skewed to basic and acidic residues over residues 700-709 (SDDHGHDVAS) and 730-746 (YAKD…EKLV). Positions 700-836 (SDDHGHDVAS…DSTPAEAGQA (137 aa)) are disordered. A phosphoserine mark is found at Ser824 and Ser826.

It belongs to the ZHX family. Homodimer (via homeobox domain 1). Heterodimer with ZHX1 (via homeobox domain 1). Heterodimer with ZHX3 (via homeobox domain 1). Heterodimerization with ZHX1 is not necessary for repressor activity. Interacts (via homeobox domain) with NFYA (via N-terminus). Interacts with EFNB1 intracellular domain peptide; the interaction enhances ZHX2 transcriptional repression activity.

Its subcellular location is the nucleus. Its function is as follows. Acts as a transcriptional repressor. Represses the promoter activity of the CDC25C gene stimulated by NFYA. May play a role in retinal development where it regulates the composition of bipolar cell populations, by promoting differentiation of bipolar OFF-type cells. In the brain, may promote maintenance and suppress differentiation of neural progenitor cells in the developing cortex. The chain is Zinc fingers and homeoboxes protein 2 (Zhx2) from Rattus norvegicus (Rat).